We begin with the raw amino-acid sequence, 1548 residues long: UDP-glucose:glycoprotein glucosyltransferase (1548 aa).

A signal peptide spans 1-22 (MLRAVALCVSVVLIALYTPTSG). Asn-181 carries an N-linked (GlcNAc...) asparagine glycan. The segment covering 243–253 (TEYKSQDDAPK) has biased composition (basic and acidic residues). A disordered region spans residues 243 to 265 (TEYKSQDDAPKPEAGSTSDEDLA). N-linked (GlcNAc...) asparagine glycosylation is found at Asn-266 and Asn-864. Positions 1227–1548 (SANQAATDED…PSHEPKHGEL (322 aa)) are glucosyltransferase. A compositionally biased stretch (basic and acidic residues) spans 1512–1523 (EDHENSHSRDSA). Residues 1512–1548 (EDHENSHSRDSAVDDSVDDSVEVTTVTPSHEPKHGEL) form a disordered region. Residues 1545-1548 (HGEL) carry the Prevents secretion from ER motif.

This sequence belongs to the glycosyltransferase 8 family. As to quaternary structure, monomer. May interact with CG7484/Sep15. Ca(2+) serves as cofactor. Requires Mn(2+) as cofactor.

It is found in the endoplasmic reticulum lumen. It localises to the endoplasmic reticulum-Golgi intermediate compartment. It carries out the reaction N(4)-(alpha-D-Man-(1-&gt;2)-alpha-D-Man-(1-&gt;2)-alpha-D-Man-(1-&gt;3)-[alpha-D-Man-(1-&gt;2)-alpha-D-Man-(1-&gt;3)-[alpha-D-Man-(1-&gt;2)-alpha-D-Man-(1-&gt;6)]-alpha-D-Man-(1-&gt;6)]-beta-D-Man-(1-&gt;4)-beta-D-GlcNAc-(1-&gt;4)-beta-D-GlcNAc)-L-asparaginyl-[protein] (N-glucan mannose isomer 9A1,2,3B1,2,3) + UDP-alpha-D-glucose = N(4)-(alpha-D-Glc-(1-&gt;3)-alpha-D-Man-(1-&gt;2)-alpha-D-Man-(1-&gt;2)-alpha-D-Man-(1-&gt;3)-[alpha-D-Man-(1-&gt;2)-alpha-D-Man-(1-&gt;3)-[alpha-D-Man-(1-&gt;2)-alpha-D-Man-(1-&gt;6)]-alpha-D-Man-(1-&gt;6)]-beta-D-Man-(1-&gt;4)-beta-D-GlcNAc-(1-&gt;4)-beta-D-GlcNAc)-L-asparaginyl-[protein] + UDP + H(+). It functions in the pathway protein modification; protein glycosylation. Recognizes glycoproteins with minor folding defects. Reglucosylates single N-glycans near the misfolded part of the protein, thus providing quality control for protein folding in the endoplasmic reticulum. Reglucosylated proteins are recognized by calreticulin for recycling to the endoplasmic reticulum and refolding or degradation. This chain is UDP-glucose:glycoprotein glucosyltransferase, found in Drosophila melanogaster (Fruit fly).